A 280-amino-acid chain; its full sequence is Large ribosomal subunit protein uL2 (280 aa).

Disordered regions lie at residues 32-54 (SLLV…SRHM) and 221-280 (RGMA…DSKK). Polar residues predominate over residues 37–49 (NKSTGGRNNNGRV). Residues 232-242 (MGGGEGKSKSG) are compositionally biased toward gly residues. The span at 257–280 (KGLKTRKRKKASSKLIVRRRDSKK) shows a compositional bias: basic residues.

The protein belongs to the universal ribosomal protein uL2 family. As to quaternary structure, part of the 50S ribosomal subunit. Forms a bridge to the 30S subunit in the 70S ribosome.

One of the primary rRNA binding proteins. Required for association of the 30S and 50S subunits to form the 70S ribosome, for tRNA binding and peptide bond formation. It has been suggested to have peptidyltransferase activity; this is somewhat controversial. Makes several contacts with the 16S rRNA in the 70S ribosome. This chain is Large ribosomal subunit protein uL2, found in Chloroherpeton thalassium (strain ATCC 35110 / GB-78).